We begin with the raw amino-acid sequence, 207 residues long: Ribonuclease HII (207 aa).

The 188-residue stretch at 20-207 (QLFAGVDEVG…KPVKRVLGIE (188 aa)) folds into the RNase H type-2 domain. 3 residues coordinate a divalent metal cation: Asp26, Glu27, and Asp118.

The protein belongs to the RNase HII family. Requires Mn(2+) as cofactor. The cofactor is Mg(2+).

Its subcellular location is the cytoplasm. The enzyme catalyses Endonucleolytic cleavage to 5'-phosphomonoester.. Endonuclease that specifically degrades the RNA of RNA-DNA hybrids. This chain is Ribonuclease HII, found in Aliivibrio fischeri (strain MJ11) (Vibrio fischeri).